Consider the following 95-residue polypeptide: Aspartyl/glutamyl-tRNA(Asn/Gln) amidotransferase subunit C (95 aa).

Belongs to the GatC family. As to quaternary structure, heterotrimer of A, B and C subunits.

It carries out the reaction L-glutamyl-tRNA(Gln) + L-glutamine + ATP + H2O = L-glutaminyl-tRNA(Gln) + L-glutamate + ADP + phosphate + H(+). The catalysed reaction is L-aspartyl-tRNA(Asn) + L-glutamine + ATP + H2O = L-asparaginyl-tRNA(Asn) + L-glutamate + ADP + phosphate + 2 H(+). Its function is as follows. Allows the formation of correctly charged Asn-tRNA(Asn) or Gln-tRNA(Gln) through the transamidation of misacylated Asp-tRNA(Asn) or Glu-tRNA(Gln) in organisms which lack either or both of asparaginyl-tRNA or glutaminyl-tRNA synthetases. The reaction takes place in the presence of glutamine and ATP through an activated phospho-Asp-tRNA(Asn) or phospho-Glu-tRNA(Gln). The chain is Aspartyl/glutamyl-tRNA(Asn/Gln) amidotransferase subunit C from Shouchella clausii (strain KSM-K16) (Alkalihalobacillus clausii).